The primary structure comprises 556 residues: Hydroxylamine reductase (556 aa).

Positions 4, 7, 19, and 26 each coordinate [4Fe-4S] cluster. Residues H252, E276, C320, C407, C435, C460, E494, and K496 each contribute to the hybrid [4Fe-2O-2S] cluster site. Position 407 is a cysteine persulfide (C407).

It belongs to the HCP family. It depends on [4Fe-4S] cluster as a cofactor. Hybrid [4Fe-2O-2S] cluster is required as a cofactor.

The protein localises to the cytoplasm. The catalysed reaction is A + NH4(+) + H2O = hydroxylamine + AH2 + H(+). Catalyzes the reduction of hydroxylamine to form NH(3) and H(2)O. This is Hydroxylamine reductase from Acidithiobacillus ferridurans.